Consider the following 394-residue polypeptide: Elongation factor Tu 2 (394 aa).

The tr-type G domain maps to 10-204 (KPHVNVGTIG…ALDSYIPEPE (195 aa)). The segment at 19 to 26 (GHVDHGKT) is G1. Residue 19-26 (GHVDHGKT) coordinates GTP. Residue threonine 26 coordinates Mg(2+). A G2 region spans residues 60–64 (GITIN). The tract at residues 81–84 (DCPG) is G3. GTP contacts are provided by residues 81–85 (DCPGH) and 136–139 (NKCD). The segment at 136-139 (NKCD) is G4. Residues 174–176 (SAL) are G5.

The protein belongs to the TRAFAC class translation factor GTPase superfamily. Classic translation factor GTPase family. EF-Tu/EF-1A subfamily. Monomer.

It localises to the cytoplasm. It carries out the reaction GTP + H2O = GDP + phosphate + H(+). In terms of biological role, GTP hydrolase that promotes the GTP-dependent binding of aminoacyl-tRNA to the A-site of ribosomes during protein biosynthesis. In Shewanella sp. (strain MR-4), this protein is Elongation factor Tu 2.